The sequence spans 663 residues: DNA ligase (663 aa).

NAD(+) contacts are provided by residues 31–35 (DSEYD), 80–81 (SL), and glutamate 109. Catalysis depends on lysine 111, which acts as the N6-AMP-lysine intermediate. NAD(+)-binding residues include arginine 132, glutamate 166, lysine 282, and lysine 306. Residues cysteine 400, cysteine 403, cysteine 418, and cysteine 423 each coordinate Zn(2+). The BRCT domain maps to 585-663 (ELHPVFGEKT…EQMMVDALRN (79 aa)).

It belongs to the NAD-dependent DNA ligase family. LigA subfamily. Mg(2+) is required as a cofactor. It depends on Mn(2+) as a cofactor.

It catalyses the reaction NAD(+) + (deoxyribonucleotide)n-3'-hydroxyl + 5'-phospho-(deoxyribonucleotide)m = (deoxyribonucleotide)n+m + AMP + beta-nicotinamide D-nucleotide.. In terms of biological role, DNA ligase that catalyzes the formation of phosphodiester linkages between 5'-phosphoryl and 3'-hydroxyl groups in double-stranded DNA using NAD as a coenzyme and as the energy source for the reaction. It is essential for DNA replication and repair of damaged DNA. This is DNA ligase from Macrococcus caseolyticus (strain JCSC5402) (Macrococcoides caseolyticum).